The primary structure comprises 705 residues: Bifunctional arginine dihydrolase/ornithine cyclodeaminase ArgZ (705 aa).

The interval 10–269 (CPPDHYDVDY…GAAKCLTLRV (260 aa)) is arginine dihydrolase. L-arginine-binding residues include Asn-22, Asn-71, Arg-90, Arg-139, His-168, Asp-170, Ala-258, and Cys-264. Residues Asn-22, Asn-71, Arg-90, Arg-139, and His-168 each coordinate L-ornithine. The active-site Proton donor/acceptor is His-168. Residues Ala-258 and Cys-264 each coordinate L-ornithine. The Nucleophile role is filled by Cys-264. Positions 285 to 695 (SRVIRMEGHL…SLLVRQLQQL (411 aa)) are ornithine cyclodeaminase. NAD(+) contacts are provided by Asn-525, Ala-526, Asp-604, Ser-636, Met-637, Leu-638, His-639, Asp-657, Asp-680, and Val-681.

In the N-terminal section; belongs to the DDAH family. The protein in the C-terminal section; belongs to the AgrE/ArgZ ornithine cyclodeaminase family. Homotetramer. NAD(+) serves as cofactor.

It catalyses the reaction L-arginine + 2 H2O + 2 H(+) = L-ornithine + 2 NH4(+) + CO2. It carries out the reaction L-ornithine = L-proline + NH4(+). Its activity is regulated as follows. Arginine dihydrolase activity does not require a metal cofactor. Bifunctional enzyme involved in a cyanobacterial arginine utilization pathway that enables cellular adaptation to nitrogen fluctuations. Catalyzes the hydrolysis of arginine to ornithine, with the release of ammonia and carbon dioxide. Then, probably catalyzes the conversion of ornithine to proline, with the release of ammonia. Is highly specific for arginine and cannot hydrolyze citrulline, dimethylarginine and other amino acids. The polypeptide is Bifunctional arginine dihydrolase/ornithine cyclodeaminase ArgZ (Synechocystis sp. (strain ATCC 27184 / PCC 6803 / Kazusa)).